The primary structure comprises 204 residues: UPF0637 protein USA300HOU_1046.1 (204 aa).

Belongs to the UPF0637 family.

The polypeptide is UPF0637 protein USA300HOU_1046.1 (Staphylococcus aureus (strain USA300 / TCH1516)).